Consider the following 404-residue polypeptide: Ubiquitin-like modifier-activating enzyme 5 (404 aa).

Ser-45 carries the phosphoserine modification. 5 residues coordinate ATP: Gly-83, Asp-104, Lys-127, Asn-150, and Asn-184. Residues Cys-226 and Cys-229 each contribute to the Zn(2+) site. The Glycyl thioester intermediate role is filled by Cys-250. Residues Cys-303 and Cys-308 each contribute to the Zn(2+) site. Residues 334–346 (IIHEDNEWGIELV) carry the UFM1-interacting sequence (UIS) motif. The linker stretch occupies residues 347–377 (SEVSEEELKNFSGPVPDLPEGITVAYTIPKK). Ser-358 and Ser-393 each carry phosphoserine. Residues 389–404 (DSGESLEDLMAKMKNM) carry the UFC1-binding sequence (UFC) motif.

This sequence belongs to the ubiquitin-activating E1 family. UBA5 subfamily. As to quaternary structure, homodimer; homodimerization is required for UFM1 activation. Interacts (via UIS motif) with UFM1; binds UFM1 via a trans-binding mechanism in which UFM1 interacts with distinct sites in both subunits of the UBA5 homodimer. Interacts (via C-terminus) with UFC1. Interacts (via UIS motif) with GABARAPL2 and, with lower affinity, with GABARAP and GABARAPL1. In terms of tissue distribution, widely expressed.

It is found in the cytoplasm. It localises to the nucleus. Its subcellular location is the endoplasmic reticulum membrane. The protein localises to the golgi apparatus. Its function is as follows. E1-like enzyme which specifically catalyzes the first step in ufmylation. Activates UFM1 by first adenylating its C-terminal glycine residue with ATP, and thereafter linking this residue to the side chain of a cysteine residue in E1, yielding a UFM1-E1 thioester and free AMP. Activates UFM1 via a trans-binding mechanism, in which UFM1 interacts with distinct sites in both subunits of the UBA5 homodimer. Trans-binding also promotes stabilization of the UBA5 homodimer, and enhances ATP-binding. Transfer of UFM1 from UBA5 to the E2-like enzyme UFC1 also takes place using a trans mechanism. Ufmylation plays a key role in various processes, such as ribosome recycling, response to DNA damage, interferon response or reticulophagy (also called ER-phagy). Ufmylation is essential for erythroid differentiation of both megakaryocytes and erythrocytes. The polypeptide is Ubiquitin-like modifier-activating enzyme 5 (Homo sapiens (Human)).